The chain runs to 718 residues: Homeobox-leucine zipper protein HDG9 (718 aa).

The span at 1-12 (MDFTRDDNSSDE) shows a compositional bias: basic and acidic residues. The segment at 1-35 (MDFTRDDNSSDERENDVDANTNNRHEKKGYHRHTN) is disordered. A DNA-binding region (homeobox) is located at residues 26 to 85 (EKKGYHRHTNEQIHRLETYFKECPHPDEFQRRLLGEELNLKPKQIKFWFQNKRTQAKSHN). Positions 78–152 (RTQAKSHNEK…LKDEYERVSN (75 aa)) form a coiled coil. Residues 169 to 209 (PYLHGPSNHASTSKNRPALYGTSSNRLPEPSSIFRGPYTRG) form a disordered region. The span at 176 to 194 (NHASTSKNRPALYGTSSNR) shows a compositional bias: polar residues. The START domain maps to 232 to 464 (SQLEKIAMLE…LERTCERLIF (233 aa)).

Belongs to the HD-ZIP homeobox family. Class IV subfamily. As to expression, expressed in anthers with highest levels in the tapetum and pollen grains, and chalazal end of the embryo sac.

It localises to the nucleus. Its function is as follows. Probable transcription factor that binds to the DNA sequence 5'-GCATTAAATGCGCA-3'. The sequence is that of Homeobox-leucine zipper protein HDG9 (HDG9) from Arabidopsis thaliana (Mouse-ear cress).